Here is a 151-residue protein sequence, read N- to C-terminus: Small ribosomal subunit protein uS15 (151 aa).

Residue Ser32 is modified to Phosphoserine. Glycyl lysine isopeptide (Lys-Gly) (interchain with G-Cter in ubiquitin) cross-links involve residues Lys39 and Lys43.

The protein belongs to the universal ribosomal protein uS15 family. Component of the small ribosomal subunit (SSU). Mature yeast ribosomes consist of a small (40S) and a large (60S) subunit. The 40S small subunit contains 1 molecule of ribosomal RNA (18S rRNA) and 33 different proteins (encoded by 57 genes). The large 60S subunit contains 3 rRNA molecules (25S, 5.8S and 5S rRNA) and 46 different proteins (encoded by 81 genes).

It is found in the cytoplasm. Functionally, component of the ribosome, a large ribonucleoprotein complex responsible for the synthesis of proteins in the cell. The small ribosomal subunit (SSU) binds messenger RNAs (mRNAs) and translates the encoded message by selecting cognate aminoacyl-transfer RNA (tRNA) molecules. The large subunit (LSU) contains the ribosomal catalytic site termed the peptidyl transferase center (PTC), which catalyzes the formation of peptide bonds, thereby polymerizing the amino acids delivered by tRNAs into a polypeptide chain. The nascent polypeptides leave the ribosome through a tunnel in the LSU and interact with protein factors that function in enzymatic processing, targeting, and the membrane insertion of nascent chains at the exit of the ribosomal tunnel. The sequence is that of Small ribosomal subunit protein uS15 from Saccharomyces cerevisiae (strain ATCC 204508 / S288c) (Baker's yeast).